A 486-amino-acid polypeptide reads, in one-letter code: Glycogen synthase (486 aa).

Lysine 20 contributes to the ADP-alpha-D-glucose binding site.

It belongs to the glycosyltransferase 1 family. Bacterial/plant glycogen synthase subfamily.

It carries out the reaction [(1-&gt;4)-alpha-D-glucosyl](n) + ADP-alpha-D-glucose = [(1-&gt;4)-alpha-D-glucosyl](n+1) + ADP + H(+). It functions in the pathway glycan biosynthesis; glycogen biosynthesis. In terms of biological role, synthesizes alpha-1,4-glucan chains using ADP-glucose. The sequence is that of Glycogen synthase from Aeromonas hydrophila subsp. hydrophila (strain ATCC 7966 / DSM 30187 / BCRC 13018 / CCUG 14551 / JCM 1027 / KCTC 2358 / NCIMB 9240 / NCTC 8049).